Consider the following 271-residue polypeptide: Urease accessory protein UreD (271 aa).

This sequence belongs to the UreD family. UreD, UreF and UreG form a complex that acts as a GTP-hydrolysis-dependent molecular chaperone, activating the urease apoprotein by helping to assemble the nickel containing metallocenter of UreC. The UreE protein probably delivers the nickel.

The protein resides in the cytoplasm. Its function is as follows. Required for maturation of urease via the functional incorporation of the urease nickel metallocenter. The protein is Urease accessory protein UreD of Haemophilus influenzae (strain PittGG).